A 422-amino-acid chain; its full sequence is Inner membrane ALBINO3-like protein 2, chloroplastic (422 aa).

Residues 1–10 are compositionally biased toward polar residues; the sequence is MALQMKQSPS. The interval 1–22 is disordered; it reads MALQMKQSPSMGVRRASQPVLP. A helical membrane pass occupies residues 65-85; sequence LYTLAEGGPIDVLAQFFEFVL. Topologically, residues 86–96 are stromal; it reads QTLDEGLESAK. Residues 97–117 form a helical membrane-spanning segment; sequence IPYSYGFAIIALTVLVKVATF. Topologically, residues 118-166 are lumenal; that stretch reads PLTQKQVESTLSLQALQPRVKELQAKYADDPENLQLETARLYKEAGVNP. Residues 167–187 traverse the membrane as a helical segment; sequence LAGCFPTLATIPVFIGLYNAL. The Stromal portion of the chain corresponds to 188–225; it reads SNAAKEGLLTEGFFWIPSLGGPTTIGGGLEWLVPFENG. The helical transmembrane segment at 226 to 246 threads the bilayer; that stretch reads APPVGWANAAAYLVMPVLLVA. The Lumenal segment spans residues 247 to 275; sequence SQYASQKIISSQNNQDPSQQQAQAILKFL. A helical transmembrane segment spans residues 276-296; sequence PLMIGWFSLNVPSGLTLYWFV. Residues 297–422 lie on the Stromal side of the membrane; the sequence is NNLLSTGQQL…GSEEGKDNSA (126 aa). The disordered stretch occupies residues 325–422; the sequence is TAGSSTPIVK…GSEEGKDNSA (98 aa). Residues 334-350 are compositionally biased toward basic and acidic residues; sequence KPKEERVKKVTGKELGS. Residues 358 to 367 are compositionally biased toward acidic residues; that stretch reads DGEEVEDVEV. Residues 368 to 380 are compositionally biased toward low complexity; it reads EVVSSGSSSSSGS. Over residues 386–400 the composition is skewed to basic and acidic residues; the sequence is RKGEKFRALKAREAA.

Belongs to the OXA1/ALB3/YidC (TC 2.A.9.2) family.

It localises to the plastid. The protein resides in the chloroplast thylakoid membrane. Functionally, required for the insertion of some light-harvesting complexes (LHC) proteins into the chloroplast thylakoid membrane. Essential for the assembly and activity of LHC I and II. Its function is probably partly distinct from that of ALB3.1. This chain is Inner membrane ALBINO3-like protein 2, chloroplastic (ALB3.2), found in Chlamydomonas reinhardtii (Chlamydomonas smithii).